The following is a 65-amino-acid chain: VESP-VB2 (65 aa).

The first 23 residues, 1 to 23 (MKMSILFLFALIASLACLQLTFA), serve as a signal peptide directing secretion. AXPX repeat units lie at residues 23–26 (AAPA), 27–30 (ASPF), 31–34 (ANPG), 35–38 (ASPE), 39–42 (AAPL), 43–46 (ADPL), and 47–50 (ADPF). The propeptide occupies 24–49 (APAASPFANPGASPEAAPLADPLADP). Leu62 carries the post-translational modification Leucine amide.

It belongs to the MCD family. Mastoparan subfamily. As to expression, expressed by the venom gland.

Its subcellular location is the secreted. In terms of biological role, antimicrobial peptide. Shows activity against both Gram-positive and -negative bacteria, as well against fungi. Also promotes important mast cell degranulation. Shows little hemolytic activity on rabbit and human erythrocytes. Its mast cell degranulation activity may be related to the activation of G-protein coupled receptors in mast cells as well as interaction with other proteins located in cell endosomal membranes in the mast cells. The chain is VESP-VB2 from Vespa bicolor (Black shield wasp).